The primary structure comprises 212 residues: MGTEFNGLFDEWAHTYDSFVQGEDIQYKEVFAHYEDILEDVVNKSFGNVLEFGVGTGNLTNKLLLAGRTVYGIEPSREMRMIAKEKLPKEFSITEGDFLSFEVPTSIDTIVSTYAFHHLTDDEKNVAIAKYSQLLNKGGKIVFADTIFADQDAYDKTVEAAKQRGFHQLANDLQTEYYTRIPVMQTIFENNGFHVTFTRLNHFVWVMEATKQ.

S-adenosyl-L-methionine contacts are provided by Gly-53, Glu-74, and Asp-97.

It belongs to the methyltransferase superfamily. YrrT family.

Could be a S-adenosyl-L-methionine-dependent methyltransferase. This is an uncharacterized protein from Bacillus cereus (strain ZK / E33L).